We begin with the raw amino-acid sequence, 61 residues long: Small ribosomal subunit protein uS14 (61 aa).

The Zn(2+) site is built by cysteine 24, cysteine 27, cysteine 40, and cysteine 43.

This sequence belongs to the universal ribosomal protein uS14 family. Zinc-binding uS14 subfamily. Part of the 30S ribosomal subunit. Contacts proteins S3 and S10. The cofactor is Zn(2+).

Its function is as follows. Binds 16S rRNA, required for the assembly of 30S particles and may also be responsible for determining the conformation of the 16S rRNA at the A site. The polypeptide is Small ribosomal subunit protein uS14 (Coprothermobacter proteolyticus (strain ATCC 35245 / DSM 5265 / OCM 4 / BT)).